The sequence spans 54 residues: Ovomucoid (54 aa).

The Kazal-like domain maps to 4–54; the sequence is VDCSEHPKPACTLEDRPLCGSDNKIYSNKCDFCNAVLESNGTLTLSHFGKC. Intrachain disulfides connect Cys-6/Cys-36, Cys-14/Cys-33, and Cys-22/Cys-54. N-linked (GlcNAc...) asparagine glycosylation is present at Asn-43.

Its subcellular location is the secreted. The protein is Ovomucoid of Argusianus argus (Great argus).